A 218-amino-acid chain; its full sequence is Probable 3-keto-L-gulonate-6-phosphate decarboxylase (218 aa).

D11 contacts substrate. E33 and D62 together coordinate Mg(2+). Residue R194 coordinates substrate.

It belongs to the HPS/KGPDC family. KGPDC subfamily. The cofactor is Mg(2+).

It catalyses the reaction 3-dehydro-L-gulonate 6-phosphate + H(+) = L-xylulose 5-phosphate + CO2. The protein operates within cofactor degradation; L-ascorbate degradation; D-xylulose 5-phosphate from L-ascorbate: step 2/4. Its function is as follows. Catalyzes the decarboxylation of 3-keto-L-gulonate-6-P into L-xylulose-5-P. Is involved in the anaerobic L-ascorbate utilization. In Mycoplasma pneumoniae (strain ATCC 29342 / M129 / Subtype 1) (Mycoplasmoides pneumoniae), this protein is Probable 3-keto-L-gulonate-6-phosphate decarboxylase (ulaD).